Consider the following 339-residue polypeptide: Phenylalanine--tRNA ligase alpha subunit (339 aa).

Glu-250 provides a ligand contact to Mg(2+).

The protein belongs to the class-II aminoacyl-tRNA synthetase family. Phe-tRNA synthetase alpha subunit type 1 subfamily. As to quaternary structure, tetramer of two alpha and two beta subunits. The cofactor is Mg(2+).

The protein localises to the cytoplasm. It catalyses the reaction tRNA(Phe) + L-phenylalanine + ATP = L-phenylalanyl-tRNA(Phe) + AMP + diphosphate + H(+). The protein is Phenylalanine--tRNA ligase alpha subunit of Flavobacterium johnsoniae (strain ATCC 17061 / DSM 2064 / JCM 8514 / BCRC 14874 / CCUG 350202 / NBRC 14942 / NCIMB 11054 / UW101) (Cytophaga johnsonae).